Here is a 275-residue protein sequence, read N- to C-terminus: Endolytic peptidoglycan transglycosylase RlpA (275 aa).

The signal sequence occupies residues 1-22 (MQIKTITLKLSAVSLGALFFSG). Cysteine 23 carries N-palmitoyl cysteine lipidation. Cysteine 23 carries the S-diacylglycerol cysteine lipid modification. The 76-residue stretch at 200-275 (IYEGGNFMVQ…AFAGAFVVRE (76 aa)) folds into the SPOR domain.

The protein belongs to the RlpA family.

Its subcellular location is the cell membrane. Functionally, lytic transglycosylase with a strong preference for naked glycan strands that lack stem peptides. The polypeptide is Endolytic peptidoglycan transglycosylase RlpA (Campylobacter jejuni subsp. jejuni serotype O:2 (strain ATCC 700819 / NCTC 11168)).